Consider the following 429-residue polypeptide: Adenylosuccinate synthetase (429 aa).

GTP contacts are provided by residues 12-18 and 40-42; these read GDEGKGK and GHT. D13 serves as the catalytic Proton acceptor. Mg(2+) is bound by residues D13 and G40. IMP is bound by residues 13 to 16, 38 to 41, T129, R143, Q224, T239, and R303; these read DEGK and NAGH. Residue H41 is the Proton donor of the active site. Residue 299-305 coordinates substrate; that stretch reads ATTGRKR. GTP is bound by residues R305, 331-333, and 413-415; these read KLD and SVG.

This sequence belongs to the adenylosuccinate synthetase family. As to quaternary structure, homodimer. The cofactor is Mg(2+).

The protein resides in the cytoplasm. It catalyses the reaction IMP + L-aspartate + GTP = N(6)-(1,2-dicarboxyethyl)-AMP + GDP + phosphate + 2 H(+). It functions in the pathway purine metabolism; AMP biosynthesis via de novo pathway; AMP from IMP: step 1/2. Functionally, plays an important role in the de novo pathway of purine nucleotide biosynthesis. Catalyzes the first committed step in the biosynthesis of AMP from IMP. The chain is Adenylosuccinate synthetase from Desulfosudis oleivorans (strain DSM 6200 / JCM 39069 / Hxd3) (Desulfococcus oleovorans).